The sequence spans 114 residues: Translation initiation factor 1A (114 aa).

An S1-like domain is found at 19–91 (SEFRLPGEGE…EKGDIVHKYE (73 aa)).

This sequence belongs to the eIF-1A family.

Seems to be required for maximal rate of protein biosynthesis. Enhances ribosome dissociation into subunits and stabilizes the binding of the initiator Met-tRNA(I) to 40 S ribosomal subunits. In Pyrobaculum aerophilum (strain ATCC 51768 / DSM 7523 / JCM 9630 / CIP 104966 / NBRC 100827 / IM2), this protein is Translation initiation factor 1A (eIF1A).